Consider the following 251-residue polypeptide: uncharacterized protein (251 aa).

A divalent metal cation-binding residues include histidine 6, histidine 8, glutamate 90, histidine 130, histidine 154, and aspartate 202.

This sequence belongs to the metallo-dependent hydrolases superfamily. TatD-type hydrolase family. A divalent metal cation serves as cofactor.

This is an uncharacterized protein from Haemophilus influenzae (strain ATCC 51907 / DSM 11121 / KW20 / Rd).